The sequence spans 419 residues: Ribosome biogenesis protein WDR12 homolog (419 aa).

Residues 10–91 (VQVHLKTKQE…EDSIEIEYVE (82 aa)) are ubiquitin-like (UBL) domain. 7 WD repeats span residues 103 to 140 (LHDD…KLTI), 142 to 184 (GHTA…NAVE), 191 to 230 (GHER…AGES), 249 to 287 (GHRE…IKTE), 289 to 328 (STNK…GSVV), 334 to 374 (GHNA…APLY), and 378 to 416 (GHGE…VENM).

It belongs to the WD repeat WDR12/YTM1 family.

Its subcellular location is the nucleus. It is found in the nucleolus. It localises to the nucleoplasm. In terms of biological role, required for maturation of ribosomal RNAs and formation of the large ribosomal subunit. The polypeptide is Ribosome biogenesis protein WDR12 homolog (Drosophila mojavensis (Fruit fly)).